Consider the following 407-residue polypeptide: 8-amino-7-oxononanoate synthase (407 aa).

Arginine 24 serves as a coordination point for substrate. 111 to 112 is a pyridoxal 5'-phosphate binding site; it reads GF. Residue histidine 137 participates in substrate binding. 3 residues coordinate pyridoxal 5'-phosphate: serine 183, histidine 211, and threonine 239. Position 242 is an N6-(pyridoxal phosphate)lysine (lysine 242). Threonine 356 provides a ligand contact to substrate.

The protein belongs to the class-II pyridoxal-phosphate-dependent aminotransferase family. BioF subfamily. In terms of assembly, homodimer. The cofactor is pyridoxal 5'-phosphate.

The enzyme catalyses 6-carboxyhexanoyl-[ACP] + L-alanine + H(+) = (8S)-8-amino-7-oxononanoate + holo-[ACP] + CO2. It functions in the pathway cofactor biosynthesis; biotin biosynthesis. Catalyzes the decarboxylative condensation of pimeloyl-[acyl-carrier protein] and L-alanine to produce 8-amino-7-oxononanoate (AON), [acyl-carrier protein], and carbon dioxide. The protein is 8-amino-7-oxononanoate synthase of Stenotrophomonas maltophilia (strain R551-3).